The following is an 895-amino-acid chain: uncharacterized protein (895 aa).

2 to 19 lines the NAD(+) pocket; the sequence is NISVIGTGYVGLIQAVGL. Residue Cys-261 is part of the active site. Residues 468–614 enclose the DOD-type homing endonuclease domain; the sequence is LIGYYLSEGW…LLILLQLLGI (147 aa).

Belongs to the UDP-glucose/GDP-mannose dehydrogenase family. In terms of processing, this protein undergoes a protein self splicing that involves a post-translational excision of the intervening region (intein) followed by peptide ligation.

This is an uncharacterized protein from Methanocaldococcus jannaschii (strain ATCC 43067 / DSM 2661 / JAL-1 / JCM 10045 / NBRC 100440) (Methanococcus jannaschii).